A 244-amino-acid chain; its full sequence is Extracellular superoxide dismutase [Cu-Zn] (244 aa).

The first 15 residues, Met-1 to Gly-15, serve as a signal peptide directing secretion. 2 disulfides stabilise this stretch: Cys-70–Cys-215 and Cys-132–Cys-214. Asn-114 carries an N-linked (GlcNAc...) asparagine glycan. Cu cation is bound by residues His-121, His-123, and His-138. His-138, His-146, His-149, and Asp-152 together coordinate Zn(2+). His-188 lines the Cu cation pocket. The segment at Ala-224–Thr-244 is disordered.

The protein belongs to the Cu-Zn superoxide dismutase family. Homodimer. Interacts with ATP7A; this interaction is copper-dependent and is required for SOD3 activity. Requires Cu cation as cofactor. Zn(2+) is required as a cofactor.

Its subcellular location is the secreted. The protein resides in the extracellular space. It localises to the golgi apparatus. The protein localises to the trans-Golgi network. It carries out the reaction 2 superoxide + 2 H(+) = H2O2 + O2. Its function is as follows. Protect the extracellular space from toxic effect of reactive oxygen intermediates by converting superoxide radicals into hydrogen peroxide and oxygen. The polypeptide is Extracellular superoxide dismutase [Cu-Zn] (Sod3) (Rattus norvegicus (Rat)).